A 125-amino-acid chain; its full sequence is MILGTGIDIVEVPRIAQSIQRFGDRFLGRIYTPAEIRYCQSKANAVERFAARFAAKEAAMKAIGTGMRGGVTWHDFEVGREPGGRPTMVFHGKAAQVAQGLGGRRAHLSVSHTEQYAVASVILED.

Asp-8 and Glu-57 together coordinate Mg(2+).

This sequence belongs to the P-Pant transferase superfamily. AcpS family. Requires Mg(2+) as cofactor.

The protein localises to the cytoplasm. The catalysed reaction is apo-[ACP] + CoA = holo-[ACP] + adenosine 3',5'-bisphosphate + H(+). Transfers the 4'-phosphopantetheine moiety from coenzyme A to a Ser of acyl-carrier-protein. The protein is Holo-[acyl-carrier-protein] synthase of Koribacter versatilis (strain Ellin345).